The following is a 312-amino-acid chain: Methionyl-tRNA formyltransferase (312 aa).

Ser107–Pro110 is a binding site for (6S)-5,6,7,8-tetrahydrofolate.

It belongs to the Fmt family.

The enzyme catalyses L-methionyl-tRNA(fMet) + (6R)-10-formyltetrahydrofolate = N-formyl-L-methionyl-tRNA(fMet) + (6S)-5,6,7,8-tetrahydrofolate + H(+). Functionally, attaches a formyl group to the free amino group of methionyl-tRNA(fMet). The formyl group appears to play a dual role in the initiator identity of N-formylmethionyl-tRNA by promoting its recognition by IF2 and preventing the misappropriation of this tRNA by the elongation apparatus. The chain is Methionyl-tRNA formyltransferase from Borreliella burgdorferi (strain ZS7) (Borrelia burgdorferi).